We begin with the raw amino-acid sequence, 663 residues long: Protein-arginine deiminase type-4 (663 aa).

Ca(2+) contacts are provided by Asn153, Asp155, Asp157, Asp165, Asp168, Glu170, Asp176, and Asp179. Citrulline occurs at positions 205, 212, and 218. Gln349 is a binding site for Ca(2+). The active site involves Asp350. Ca(2+)-binding residues include Glu351, Glu353, Asp369, and Ser370. Arg372 carries the post-translational modification Citrulline. A Ca(2+)-binding site is contributed by Asn373. Arg374 and Arg383 each carry citrulline. Arg374 lines the substrate pocket. Residues Asp388, Phe407, Leu410, and Glu411 each coordinate Ca(2+). Catalysis depends on residues His471 and Asp473. Residue Arg639 participates in substrate binding. Cys645 is a catalytic residue.

It belongs to the protein arginine deiminase family. Ca(2+) serves as cofactor. Post-translationally, autocitrullination at Arg-372 and Arg-374 inactivates the enzyme. As to expression, expressed in eosinophils and neutrophils, not expressed in peripheral monocytes or lymphocytes.

It localises to the cytoplasm. It is found in the nucleus. Its subcellular location is the cytoplasmic granule. The enzyme catalyses L-arginyl-[protein] + H2O = L-citrullyl-[protein] + NH4(+). Its activity is regulated as follows. Strongly Inhibited by F-amidine and N-alpha-benzoyl-N5-(2-chloro-1-iminoethyl)-L-ornithine amide (Cl-amidine). These inhibitors are however not specific to PADI4 and also inhibit other members of the family. Incorporation of a carboxylate ortho to the backbone amide of Cl-amidine results in inhibitors with increased specificity for PADI4: N-alpha-(2-carboxyl)benzoyl-N(5)-(2-fluoro-1-iminoethyl)-L-ornithine amide (o-F-amidine) and N-alpha-(2-carboxyl)benzoyl-N(5)-(2-chloro-1-iminoethyl)-L-ornithine amide (o-Cl-amidine). Strongly and specifically inhibited by Thr-Asp-F-amidine (TDFA); other members of the family are not inhibited. Functionally, catalyzes the citrullination/deimination of arginine residues of proteins such as histones, thereby playing a key role in histone code and regulation of stem cell maintenance. Citrullinates histone H1 at 'Arg-54' (to form H1R54ci), histone H3 at 'Arg-2', 'Arg-8', 'Arg-17' and/or 'Arg-26' (to form H3R2ci, H3R8ci, H3R17ci, H3R26ci, respectively) and histone H4 at 'Arg-3' (to form H4R3ci). Acts as a key regulator of stem cell maintenance by mediating citrullination of histone H1: citrullination of 'Arg-54' of histone H1 (H1R54ci) results in H1 displacement from chromatin and global chromatin decondensation, thereby promoting pluripotency and stem cell maintenance. Promotes profound chromatin decondensation during the innate immune response to infection in neutrophils by mediating formation of H1R54ci. Required for the formation of neutrophil extracellular traps (NETs); NETs are mainly composed of DNA fibers and are released by neutrophils to bind pathogens during inflammation. Citrullination of histone H3 prevents their methylation by CARM1 and HRMT1L2/PRMT1 and represses transcription. Citrullinates EP300/P300 at 'Arg-2142', which favors its interaction with NCOA2/GRIP1. The polypeptide is Protein-arginine deiminase type-4 (PADI4) (Homo sapiens (Human)).